A 227-amino-acid polypeptide reads, in one-letter code: Glutathione S-transferase U7 (227 aa).

Positions 8–87 constitute a GST N-terminal domain; the sequence is EEVKLLGMWA…YIDETWRDNP (80 aa). Glutathione is bound by residues 18–19, 44–45, 58–59, and 71–72; these read SP, NK, MI, and ES. The GST C-terminal domain maps to 92–215; it reads DPYERTMARF…PPEDEHLKYI (124 aa).

The protein belongs to the GST superfamily. Tau family.

The protein localises to the cytoplasm. It localises to the cytosol. The enzyme catalyses RX + glutathione = an S-substituted glutathione + a halide anion + H(+). Functionally, may be involved in the conjugation of reduced glutathione to a wide number of exogenous and endogenous hydrophobic electrophiles and have a detoxification role against certain herbicides. The protein is Glutathione S-transferase U7 (GSTU7) of Arabidopsis thaliana (Mouse-ear cress).